A 237-amino-acid chain; its full sequence is Alpha-S1-casein (237 aa).

The N-terminal stretch at 1–15 is a signal peptide; that stretch reads MKLLIFSCLVTLALA. The segment at 39–60 is disordered; sequence EDPIPVSEASSSEESVHQLNRD. Ser79, Ser80, and Ser81 each carry phosphoserine.

This sequence belongs to the alpha-casein family. In terms of tissue distribution, mammary gland specific. Secreted in milk.

Its subcellular location is the secreted. Its function is as follows. Important role in the capacity of milk to transport calcium phosphate. The polypeptide is Alpha-S1-casein (CSN1S1) (Notamacropus eugenii (Tammar wallaby)).